The primary structure comprises 754 residues: Aspartyl/asparaginyl beta-hydroxylase (754 aa).

The tract at residues 1–48 (MAPRKNAKGGGGNSSSSSSGSPTGCTSGGSSSPGARRETKQGGLKNGR) is disordered. Topologically, residues 1–56 (MAPRKNAKGGGGNSSSSSSGSPTGCTSGGSSSPGARRETKQGGLKNGRKGGLSGSS) are cytoplasmic. The segment covering 14–34 (SSSSSSGSPTGCTSGGSSSPG) has biased composition (low complexity). Serine 15 carries the phosphoserine modification. A helical; Signal-anchor for type II membrane protein membrane pass occupies residues 57–77 (FFTWFMVIALLGVWTSVAVVW). The Lumenal segment spans residues 78–754 (FDLVDYEEVL…PHQRRSLPAI (677 aa)). N-linked (GlcNAc...) asparagine glycosylation occurs at asparagine 96. Residues aspartate 109, aspartate 111, aspartate 113, aspartate 115, and aspartate 120 each contribute to the Ca(2+) site. 2 disordered regions span residues 176 to 197 (VYSE…ELQP) and 247 to 326 (EQEN…KKKK). 2 stretches are compositionally biased toward basic and acidic residues: residues 261–284 (DAER…DHAV) and 309–318 (TNKKADEPGK). 5 TPR repeats span residues 337–370 (IKAE…YPQS), 378–411 (AQCE…PDAP), 450–483 (TALK…TPND), 485–517 (FAKV…GDPG), and 521–553 (GRFY…GHFA). Asparagine 466 carries N-linked (GlcNAc...) asparagine glycosylation. 2-oxoglutarate is bound at residue tryptophan 621. A disulfide bridge connects residues cysteine 637 and cysteine 644. Position 664 (serine 664) interacts with 2-oxoglutarate. Histidine 675 provides a ligand contact to Fe cation. Residue 684-686 (RMH) participates in 2-oxoglutarate binding. N-linked (GlcNAc...) asparagine glycosylation is present at asparagine 702. Histidine 721 is a binding site for Fe cation. Residue arginine 731 coordinates 2-oxoglutarate.

It belongs to the aspartyl/asparaginyl beta-hydroxylase family. In terms of assembly, monomer. The cofactor is Fe cation. Might be processed to the 56 kDa (AA 289-754) or 52 kDa (AA 311-754) forms in the lumen of the endoplasmic reticulum.

It is found in the endoplasmic reticulum membrane. The enzyme catalyses L-aspartyl-[protein] + 2-oxoglutarate + O2 = 3-hydroxy-L-aspartyl-[protein] + succinate + CO2. Functionally, specifically hydroxylates an Asp or Asn residue in certain epidermal growth factor-like (EGF) domains of a number of proteins. This Bos taurus (Bovine) protein is Aspartyl/asparaginyl beta-hydroxylase (ASPH).